A 160-amino-acid polypeptide reads, in one-letter code: Cell cycle regulator of non-homologous end joining (160 aa).

At M1 the chain carries N-acetylmethionine. The KBM signature appears at 1–21 (METLKSDNKKRVLPSWMTAPG). Positions 78–152 (KPWEQPSLVA…EGKEEEDELK (75 aa)) are disordered. Residues 99–109 (ESPHTSSPGSS) are compositionally biased toward low complexity. An XLM motif is present at residues 150 to 160 (ELKYVREIFFS).

As to quaternary structure, interacts (via KBM motif) with XRCC5/Ku80 and XRCC6/Ku70 heterodimer. Interacts (via XLF motif) with TRIM28/KAP1, ATM, MRE11, NBN and RAD50. Interacts with splicing factor SF3B1. Interacts with ERCC6L2; this interaction is DNA independent.

The protein resides in the cytoplasm. It is found in the nucleus. It localises to the chromosome. In terms of biological role, cell-cycle-specific regulator of classical non-homologous end joining (NHEJ) of DNA double-strand break (DSB) repair, which can act both as an activator or inhibitor of NHEJ, depending on the cell cycle phase. Acts as a regulator of DNA repair pathway choice by specifically inhibiting classical NHEJ during the S and G2 phases, thereby promoting error-free repair by homologous recombination during cell cycle phases when sister chromatids are present. Preferentially protects single-stranded overhangs at break sites by inhibiting classical NHEJ, thereby creating a local environment that favors homologous recombination. Acts via interaction with XRCC5/Ku80 and XRCC6/Ku70. In contrast, acts as an activator of NHEJ during G1 phase of the cell cycle: promotes classical NHEJ in G1 phase cells via multivalent interactions that increase the affinity of DNA damage response proteins for DSB-associated chromatin. Also involved in immunoglobulin V(D)J recombination. May also act as an indirect regulator of proteasome. The polypeptide is Cell cycle regulator of non-homologous end joining (Rattus norvegicus (Rat)).